The chain runs to 501 residues: 2-isopropylmalate synthase (501 aa).

In terms of domain architecture, Pyruvate carboxyltransferase spans 7–269 (VRIFDTTLRD…QTQIKTEEIA (263 aa)). Mn(2+) contacts are provided by aspartate 16, histidine 204, histidine 206, and asparagine 240. The regulatory domain stretch occupies residues 394-501 (QLEGFTVSTG…RAYISALNRL (108 aa)).

The protein belongs to the alpha-IPM synthase/homocitrate synthase family. LeuA type 1 subfamily. Homodimer. The cofactor is Mn(2+).

Its subcellular location is the cytoplasm. The enzyme catalyses 3-methyl-2-oxobutanoate + acetyl-CoA + H2O = (2S)-2-isopropylmalate + CoA + H(+). It participates in amino-acid biosynthesis; L-leucine biosynthesis; L-leucine from 3-methyl-2-oxobutanoate: step 1/4. Its function is as follows. Catalyzes the condensation of the acetyl group of acetyl-CoA with 3-methyl-2-oxobutanoate (2-ketoisovalerate) to form 3-carboxy-3-hydroxy-4-methylpentanoate (2-isopropylmalate). This Leptospira interrogans serogroup Icterohaemorrhagiae serovar copenhageni (strain Fiocruz L1-130) protein is 2-isopropylmalate synthase.